The primary structure comprises 354 residues: 2-methylisoborneol synthase (354 aa).

The interval 1–29 (MIELIGHETPVPSQQQHTGGVRGTSACTP) is disordered. Asp113, Asp114, Glu118, Asn264, Ser268, and Glu272 together coordinate Mg(2+).

The protein belongs to the terpene synthase family. 2-methylisoborneol synthase subfamily. Mg(2+) serves as cofactor.

The enzyme catalyses (E)-2-methylgeranyl diphosphate + H2O = 2-methylisoborneol + diphosphate. Its function is as follows. Catalyzes the cyclization of 2-methylgeranyl diphosphate (2-MeGPP) to 2-methylisoborneol (2-MIB), which likely involves the intermediacy of 2-methyllinalyl diphosphate. This chain is 2-methylisoborneol synthase, found in Saccharopolyspora erythraea (strain ATCC 11635 / DSM 40517 / JCM 4748 / NBRC 13426 / NCIMB 8594 / NRRL 2338).